A 123-amino-acid chain; its full sequence is Large ribosomal subunit protein eL8 (123 aa).

It belongs to the eukaryotic ribosomal protein eL8 family. Part of the 50S ribosomal subunit. Probably part of the RNase P complex.

It is found in the cytoplasm. Functionally, multifunctional RNA-binding protein that recognizes the K-turn motif in ribosomal RNA, the RNA component of RNase P, box H/ACA, box C/D and box C'/D' sRNAs. The chain is Large ribosomal subunit protein eL8 from Thermococcus gammatolerans (strain DSM 15229 / JCM 11827 / EJ3).